A 447-amino-acid polypeptide reads, in one-letter code: GTPase Der (447 aa).

EngA-type G domains follow at residues 3 to 167 and 180 to 353; these read PVIA…QLPE and IRLA…KAAT. Residues 9–16, 56–60, 119–122, 186–193, 233–237, and 298–301 each bind GTP; these read GRPNVGKS, DTGGF, NKAE, DTAGL, and NKWD. The 86-residue stretch at 353 to 438 folds into the KH-like domain; sequence TCKMPTPVLT…PLRIEMKTSR (86 aa).

This sequence belongs to the TRAFAC class TrmE-Era-EngA-EngB-Septin-like GTPase superfamily. EngA (Der) GTPase family. As to quaternary structure, associates with the 50S ribosomal subunit.

In terms of biological role, GTPase that plays an essential role in the late steps of ribosome biogenesis. The chain is GTPase Der from Paracidovorax citrulli (strain AAC00-1) (Acidovorax citrulli).